The primary structure comprises 1166 residues: Myosin-1 (1166 aa).

The span at 1–13 shows a compositional bias: polar residues; sequence MSQKVTPFMQSLK. The segment at 1 to 71 is disordered; that stretch reads MSQKVTPFMQ…AGDSEDSPYS (71 aa). Serine 14 carries the phosphoserine modification. A compositionally biased stretch (polar residues) spans 32-45; sequence NSSGASVRLTNSNV. The 50-residue stretch at 112 to 161 folds into the Myosin N-terminal SH3-like domain; it reads KKILQSWIQLPNGNWELGKILSTSGEESVISLPEGKVIKVISETLVPANP. In terms of domain architecture, Myosin motor spans 165 to 837; sequence DGVDDLMQLS…QIGVLEDTRN (673 aa). ATP-binding positions include 256–263 and 304–312; these read GESGAGKT and NDNSSRFGK. Actin-binding regions lie at residues 589–623 and 717–739; these read LFEK…KQHL and LFQL…KPNN. IQ domains are found at residues 839-868, 862-891, 888-917, and 911-940; these read TLHG…GISI, LKRG…RHKA, RHKA…ASVV, and IADA…LKSG. A coiled-coil region spans residues 955-1005; that stretch reads SVLSELQRRVLKAEAALREKEEENDILQQRLQQYENRWSEYETKMKSMEEI. The interval 1030 to 1065 is disordered; that stretch reads ARNSDASVNASDATDWDSSSNQFRSQTSNGVGSRLQ. Polar residues predominate over residues 1032–1060; that stretch reads NSDASVNASDATDWDSSSNQFRSQTSNGV.

This sequence belongs to the TRAFAC class myosin-kinesin ATPase superfamily. Myosin family. Plant myosin class VIII subfamily. In terms of assembly, homodimer.

The protein localises to the cell junction. It is found in the plasmodesma. The protein resides in the cytoplasm. Its subcellular location is the cytoskeleton. It localises to the phragmoplast. The protein localises to the endosome. It is found in the endoplasmic reticulum. Its function is as follows. Myosin heavy chain that is required for the cell cycle-regulated transport of various organelles and proteins for their segregation. Functions by binding with its tail domain to receptor proteins on organelles and exerting force with its N-terminal motor domain against actin filaments, thereby transporting its cargo along polarized actin cables. Involved in endocytosis via its action in endosomal trafficking. This chain is Myosin-1 (VIII-1), found in Arabidopsis thaliana (Mouse-ear cress).